A 282-amino-acid chain; its full sequence is Bifunctional protein FolD (282 aa).

NADP(+) is bound by residues 165-167, serine 190, and threonine 231; that span reads GRS.

This sequence belongs to the tetrahydrofolate dehydrogenase/cyclohydrolase family. As to quaternary structure, homodimer.

The enzyme catalyses (6R)-5,10-methylene-5,6,7,8-tetrahydrofolate + NADP(+) = (6R)-5,10-methenyltetrahydrofolate + NADPH. It catalyses the reaction (6R)-5,10-methenyltetrahydrofolate + H2O = (6R)-10-formyltetrahydrofolate + H(+). It functions in the pathway one-carbon metabolism; tetrahydrofolate interconversion. In terms of biological role, catalyzes the oxidation of 5,10-methylenetetrahydrofolate to 5,10-methenyltetrahydrofolate and then the hydrolysis of 5,10-methenyltetrahydrofolate to 10-formyltetrahydrofolate. This Clostridium beijerinckii (strain ATCC 51743 / NCIMB 8052) (Clostridium acetobutylicum) protein is Bifunctional protein FolD.